The sequence spans 82 residues: ATP synthase subunit c (82 aa).

A run of 2 helical transmembrane segments spans residues 7 to 27 and 53 to 73; these read LVAL…CIGI and FLLA…AMLF.

The protein belongs to the ATPase C chain family. F-type ATPases have 2 components, F(1) - the catalytic core - and F(0) - the membrane proton channel. F(1) has five subunits: alpha(3), beta(3), gamma(1), delta(1), epsilon(1). F(0) has three main subunits: a(1), b(2) and c(10-14). The alpha and beta chains form an alternating ring which encloses part of the gamma chain. F(1) is attached to F(0) by a central stalk formed by the gamma and epsilon chains, while a peripheral stalk is formed by the delta and b chains.

Its subcellular location is the cell inner membrane. Functionally, f(1)F(0) ATP synthase produces ATP from ADP in the presence of a proton or sodium gradient. F-type ATPases consist of two structural domains, F(1) containing the extramembraneous catalytic core and F(0) containing the membrane proton channel, linked together by a central stalk and a peripheral stalk. During catalysis, ATP synthesis in the catalytic domain of F(1) is coupled via a rotary mechanism of the central stalk subunits to proton translocation. In terms of biological role, key component of the F(0) channel; it plays a direct role in translocation across the membrane. A homomeric c-ring of between 10-14 subunits forms the central stalk rotor element with the F(1) delta and epsilon subunits. This Leptothrix cholodnii (strain ATCC 51168 / LMG 8142 / SP-6) (Leptothrix discophora (strain SP-6)) protein is ATP synthase subunit c.